Here is a 101-residue protein sequence, read N- to C-terminus: Small ribosomal subunit protein uS14 (101 aa).

It belongs to the universal ribosomal protein uS14 family. As to quaternary structure, part of the 30S ribosomal subunit. Contacts proteins S3 and S10.

Functionally, binds 16S rRNA, required for the assembly of 30S particles and may also be responsible for determining the conformation of the 16S rRNA at the A site. The sequence is that of Small ribosomal subunit protein uS14 from Blochmanniella pennsylvanica (strain BPEN).